We begin with the raw amino-acid sequence, 453 residues long: Cholecystokinin receptor (453 aa).

At 1-64 (MESLRSLSNI…ILDRKKPSPS (64 aa)) the chain is on the extracellular side. Asparagine 9, asparagine 22, asparagine 30, asparagine 35, and asparagine 39 each carry an N-linked (GlcNAc...) asparagine glycan. A helical membrane pass occupies residues 65–94 (DLNLWVRIVMYSVIFLLSVFGNTLIIIVLV). Residues 95-104 (MNKRLRTITN) lie on the Cytoplasmic side of the membrane. Residues 105-131 (SFLLSLALSDLMVAVLCMPFTLIPNLM) traverse the membrane as a helical segment. Residues 132–142 (ENFIFGEVICR) lie on the Extracellular side of the membrane. Residues cysteine 141 and cysteine 223 are joined by a disulfide bond. Residues 143–164 (AAAYFMGLSVSVSTFNLVAISI) form a helical membrane-spanning segment. Residues 165–184 (ERYSAICNPLKSRVWQTRSH) are Cytoplasmic-facing. A helical membrane pass occupies residues 185-205 (AYRVIAATWVLSSIIMIPYLV). Residues 206 to 237 (YNKTVTFPMKDRRVGHQCRLVWPSKQVQQAWY) lie on the Extracellular side of the membrane. Residues 238-261 (VLLLTILFFIPGVVMIVAYGLISR) traverse the membrane as a helical segment. Residues 262 to 343 (ELYRGIQFEM…KLMAKKRVIR (82 aa)) are Cytoplasmic-facing. Residues 344 to 364 (MLIVIVAMFFICWMPIFVANT) form a helical membrane-spanning segment. Over 365-379 (WKAFDELSAFNTLTG) the chain is Extracellular. Residues 380-403 (APISFIHLLSYTSACVNPLIYCFM) form a helical membrane-spanning segment. Cysteine 401 carries S-palmitoyl cysteine lipidation. Topologically, residues 404 to 453 (NKRFRKAFLGTFSSCIKPCRNFRDTDEDIAATGASLSKFSYTTVSSLGPA) are cytoplasmic.

It belongs to the G-protein coupled receptor 1 family. Brain and stomach.

It localises to the cell membrane. Receptor for cholecystokinin. This receptor mediates its action by association with G proteins that activate a phosphatidylinositol-calcium second messenger system. Has high affinity for CCK-8 and low affinities for gastrin-17-I, CCK-4, and unsulfated CCK-8. The chain is Cholecystokinin receptor (cckar) from Xenopus laevis (African clawed frog).